Reading from the N-terminus, the 345-residue chain is Anthranilate phosphoribosyltransferase (345 aa).

Residues G84, 87 to 88 (GD), T92, 94 to 97 (NVTT), 112 to 120 (KHGNRSVSS), and S124 contribute to the 5-phospho-alpha-D-ribose 1-diphosphate site. Position 84 (G84) interacts with anthranilate. T96 serves as a coordination point for Mg(2+). Position 115 (N115) interacts with anthranilate. R170 contacts anthranilate. Mg(2+) contacts are provided by D228 and E229.

This sequence belongs to the anthranilate phosphoribosyltransferase family. In terms of assembly, homodimer. Mg(2+) serves as cofactor.

The catalysed reaction is N-(5-phospho-beta-D-ribosyl)anthranilate + diphosphate = 5-phospho-alpha-D-ribose 1-diphosphate + anthranilate. It participates in amino-acid biosynthesis; L-tryptophan biosynthesis; L-tryptophan from chorismate: step 2/5. Its function is as follows. Catalyzes the transfer of the phosphoribosyl group of 5-phosphorylribose-1-pyrophosphate (PRPP) to anthranilate to yield N-(5'-phosphoribosyl)-anthranilate (PRA). In Corynebacterium aurimucosum (strain ATCC 700975 / DSM 44827 / CIP 107346 / CN-1) (Corynebacterium nigricans), this protein is Anthranilate phosphoribosyltransferase.